Here is a 240-residue protein sequence, read N- to C-terminus: MGQKIHPVGFRLGITKDHKSCWYADPKRYPELLQEDHKIRQYIEKTLNNAGISDIRIERKAEQIELGIHTARPGVVVGRGGSGIEQLREGLQKLLGSARQIRVNVIEVPNADADAALMAEYIGQQLERRVSFRRVVRQALQRAERAEVKGIKIQVSGRLNGAEIARTEWVREGRVPLHTLRADIDYAYRTALTTYGILGIKVWIFKGEVIPGQEAAIVAPPSQPRRKSRRQQFDDRSQDG.

The region spanning 39 to 109 (IRQYIEKTLN…QIRVNVIEVP (71 aa)) is the KH type-2 domain. Residues 219–240 (APPSQPRRKSRRQQFDDRSQDG) are disordered. Basic and acidic residues predominate over residues 231–240 (QQFDDRSQDG).

This sequence belongs to the universal ribosomal protein uS3 family. As to quaternary structure, part of the 30S ribosomal subunit. Forms a tight complex with proteins S10 and S14.

Functionally, binds the lower part of the 30S subunit head. Binds mRNA in the 70S ribosome, positioning it for translation. The chain is Small ribosomal subunit protein uS3 from Synechocystis sp. (strain ATCC 27184 / PCC 6803 / Kazusa).